The following is a 149-amino-acid chain: Glycine cleavage system H protein (149 aa).

The 82-residue stretch at 23–104 (LIWVGISNHA…PYGIWLFKIN (82 aa)) folds into the Lipoyl-binding domain. An N6-lipoyllysine modification is found at K64.

This sequence belongs to the GcvH family. In terms of assembly, the glycine cleavage system is composed of four proteins: P, T, L and H. (R)-lipoate serves as cofactor.

Its function is as follows. The glycine cleavage system catalyzes the degradation of glycine. The H protein shuttles the methylamine group of glycine from the P protein to the T protein. The polypeptide is Glycine cleavage system H protein (Polynucleobacter necessarius subsp. necessarius (strain STIR1)).